A 412-amino-acid chain; its full sequence is Argininosuccinate synthase (412 aa).

ATP-binding positions include 16-24 (AYSGGLDTS) and A44. Positions 96 and 101 each coordinate L-citrulline. G126 is a binding site for ATP. L-aspartate is bound by residues T128, N132, and D133. Residue N132 coordinates L-citrulline. Residues R136, S185, S194, E270, and Y282 each contribute to the L-citrulline site.

It belongs to the argininosuccinate synthase family. Type 1 subfamily. As to quaternary structure, homotetramer.

It is found in the cytoplasm. It catalyses the reaction L-citrulline + L-aspartate + ATP = 2-(N(omega)-L-arginino)succinate + AMP + diphosphate + H(+). It functions in the pathway amino-acid biosynthesis; L-arginine biosynthesis; L-arginine from L-ornithine and carbamoyl phosphate: step 2/3. This is Argininosuccinate synthase from Shewanella baltica (strain OS195).